A 162-amino-acid chain; its full sequence is Small ribosomal subunit protein uS9 (162 aa).

The protein belongs to the universal ribosomal protein uS9 family.

This is Small ribosomal subunit protein uS9 from Parvibaculum lavamentivorans (strain DS-1 / DSM 13023 / NCIMB 13966).